Here is a 203-residue protein sequence, read N- to C-terminus: Large ribosomal subunit protein bL25 (203 aa).

This sequence belongs to the bacterial ribosomal protein bL25 family. CTC subfamily. In terms of assembly, part of the 50S ribosomal subunit; part of the 5S rRNA/L5/L18/L25 subcomplex. Contacts the 5S rRNA. Binds to the 5S rRNA independently of L5 and L18.

Its function is as follows. This is one of the proteins that binds to the 5S RNA in the ribosome where it forms part of the central protuberance. In Cupriavidus metallidurans (strain ATCC 43123 / DSM 2839 / NBRC 102507 / CH34) (Ralstonia metallidurans), this protein is Large ribosomal subunit protein bL25.